The primary structure comprises 149 residues: Nascent polypeptide-associated complex subunit beta-2 (149 aa).

In terms of domain architecture, NAC-A/B spans 38 to 103 (DKDNTKLQAE…PKENTLNGLY (66 aa)).

Belongs to the NAC-beta family. In terms of assembly, part of the nascent polypeptide-associated complex (NAC), consisting of EGD2 and either EGD1 or BTT1. NAC associates with ribosomes via EGD1 or BTT1.

It is found in the cytoplasm. The protein resides in the nucleus. Functionally, acts as a component of the nascent polypeptide-associated complex (NAC), which promotes mitochondrial protein import by enhancing productive ribosome interactions with the outer mitochondrial membrane. Also blocks the inappropriate interaction of ribosomes translating non-secretory nascent polypeptides with translocation sites in the membrane of the endoplasmic reticulum. BTT1 may act as a transcription factor that exert a negative effect on the expression of several genes that are transcribed by RNA polymerase II. This chain is Nascent polypeptide-associated complex subunit beta-2 (BTT1), found in Saccharomyces cerevisiae (strain YJM789) (Baker's yeast).